Reading from the N-terminus, the 169-residue chain is Crossover junction endodeoxyribonuclease RuvC (169 aa).

Catalysis depends on residues aspartate 11, glutamate 71, and aspartate 143. Mg(2+) contacts are provided by aspartate 11, glutamate 71, and aspartate 143.

Belongs to the RuvC family. Homodimer which binds Holliday junction (HJ) DNA. The HJ becomes 2-fold symmetrical on binding to RuvC with unstacked arms; it has a different conformation from HJ DNA in complex with RuvA. In the full resolvosome a probable DNA-RuvA(4)-RuvB(12)-RuvC(2) complex forms which resolves the HJ. Requires Mg(2+) as cofactor.

The protein localises to the cytoplasm. The enzyme catalyses Endonucleolytic cleavage at a junction such as a reciprocal single-stranded crossover between two homologous DNA duplexes (Holliday junction).. Functionally, the RuvA-RuvB-RuvC complex processes Holliday junction (HJ) DNA during genetic recombination and DNA repair. Endonuclease that resolves HJ intermediates. Cleaves cruciform DNA by making single-stranded nicks across the HJ at symmetrical positions within the homologous arms, yielding a 5'-phosphate and a 3'-hydroxyl group; requires a central core of homology in the junction. The consensus cleavage sequence is 5'-(A/T)TT(C/G)-3'. Cleavage occurs on the 3'-side of the TT dinucleotide at the point of strand exchange. HJ branch migration catalyzed by RuvA-RuvB allows RuvC to scan DNA until it finds its consensus sequence, where it cleaves and resolves the cruciform DNA. The protein is Crossover junction endodeoxyribonuclease RuvC of Rhizobium johnstonii (strain DSM 114642 / LMG 32736 / 3841) (Rhizobium leguminosarum bv. viciae).